The chain runs to 1075 residues: Carbamoyl phosphate synthase large chain (1075 aa).

The segment at 2–403 is carboxyphosphate synthetic domain; the sequence is PKRTDIKSIL…SLQKALRGLE (402 aa). The ATP site is built by arginine 129, arginine 169, glycine 175, glycine 176, glutamate 208, leucine 210, glutamate 215, glycine 241, isoleucine 242, histidine 243, glutamine 285, and glutamate 299. The region spanning 133 to 328 is the ATP-grasp 1 domain; it reads DIAMKKIGLD…IAKVAAKLAV (196 aa). Residues glutamine 285, glutamate 299, and asparagine 301 each coordinate Mg(2+). Residues glutamine 285, glutamate 299, and asparagine 301 each coordinate Mn(2+). The tract at residues 404–553 is oligomerization domain; that stretch reads VGATGFDPKV…YSTYEDECEA (150 aa). The segment at 554 to 936 is carbamoyl phosphate synthetic domain; sequence NPSIDRDKIM…AFAKAQLGSN (383 aa). The ATP-grasp 2 domain maps to 679–870; the sequence is QHAVDRLKLK…LAKVAARVMA (192 aa). Residues arginine 715, arginine 754, leucine 756, glutamate 761, glycine 786, valine 787, histidine 788, serine 789, glutamine 829, and glutamate 841 each coordinate ATP. 3 residues coordinate Mg(2+): glutamine 829, glutamate 841, and asparagine 843. Residues glutamine 829, glutamate 841, and asparagine 843 each coordinate Mn(2+). One can recognise an MGS-like domain in the interval 937 to 1075; it reads STMKKQGRAL…QEMHAQIKKS (139 aa). The interval 937–1075 is allosteric domain; sequence STMKKQGRAL…QEMHAQIKKS (139 aa).

This sequence belongs to the CarB family. Composed of two chains; the small (or glutamine) chain promotes the hydrolysis of glutamine to ammonia, which is used by the large (or ammonia) chain to synthesize carbamoyl phosphate. Tetramer of heterodimers (alpha,beta)4. It depends on Mg(2+) as a cofactor. The cofactor is Mn(2+).

It carries out the reaction hydrogencarbonate + L-glutamine + 2 ATP + H2O = carbamoyl phosphate + L-glutamate + 2 ADP + phosphate + 2 H(+). The enzyme catalyses hydrogencarbonate + NH4(+) + 2 ATP = carbamoyl phosphate + 2 ADP + phosphate + 2 H(+). Its pathway is amino-acid biosynthesis; L-arginine biosynthesis; carbamoyl phosphate from bicarbonate: step 1/1. The protein operates within pyrimidine metabolism; UMP biosynthesis via de novo pathway; (S)-dihydroorotate from bicarbonate: step 1/3. Functionally, large subunit of the glutamine-dependent carbamoyl phosphate synthetase (CPSase). CPSase catalyzes the formation of carbamoyl phosphate from the ammonia moiety of glutamine, carbonate, and phosphate donated by ATP, constituting the first step of 2 biosynthetic pathways, one leading to arginine and/or urea and the other to pyrimidine nucleotides. The large subunit (synthetase) binds the substrates ammonia (free or transferred from glutamine from the small subunit), hydrogencarbonate and ATP and carries out an ATP-coupled ligase reaction, activating hydrogencarbonate by forming carboxy phosphate which reacts with ammonia to form carbamoyl phosphate. The chain is Carbamoyl phosphate synthase large chain from Salmonella typhimurium (strain LT2 / SGSC1412 / ATCC 700720).